We begin with the raw amino-acid sequence, 539 residues long: Chaperonin GroEL 1 (539 aa).

Residues Thr29–Pro32, Asp86–Thr90, Gly413, Asn478–Ala480, and Asp494 each bind ATP. Residues Ile520–His539 are disordered. Positions Lys523–Gly533 are enriched in basic and acidic residues.

This sequence belongs to the chaperonin (HSP60) family. Forms a cylinder of 14 subunits composed of two heptameric rings stacked back-to-back. Interacts with the co-chaperonin GroES.

The protein localises to the cytoplasm. The catalysed reaction is ATP + H2O + a folded polypeptide = ADP + phosphate + an unfolded polypeptide.. Its function is as follows. Together with its co-chaperonin GroES, plays an essential role in assisting protein folding. The GroEL-GroES system forms a nano-cage that allows encapsulation of the non-native substrate proteins and provides a physical environment optimized to promote and accelerate protein folding. This is Chaperonin GroEL 1 from Mycobacterium ulcerans (strain Agy99).